Reading from the N-terminus, the 752-residue chain is Multifunctional tryptophan biosynthesis protein (752 aa).

Residues 3–202 enclose the Glutamine amidotransferase type-1 domain; the sequence is FTLLIDNYDS…IQMKGGKWGG (200 aa). Position 58–60 (58–60) interacts with L-glutamine; sequence GPG. The active-site Nucleophile; for GATase activity is Cys86. L-glutamine is bound at residue 136 to 137; sequence SL. Residues His176 and Glu178 each act as for GATase activity in the active site. The interval 231 to 495 is indole-3-glycerol phosphate synthase; that stretch reads ILNKIHAQRL…DTKAFLRSLI (265 aa). Positions 509–752 are N-(5'-phosphoribosyl)anthranilate isomerase; it reads LVKICGIRST…VEAFVKAVRG (244 aa).

It catalyses the reaction N-(5-phospho-beta-D-ribosyl)anthranilate = 1-(2-carboxyphenylamino)-1-deoxy-D-ribulose 5-phosphate. It carries out the reaction 1-(2-carboxyphenylamino)-1-deoxy-D-ribulose 5-phosphate + H(+) = (1S,2R)-1-C-(indol-3-yl)glycerol 3-phosphate + CO2 + H2O. The catalysed reaction is chorismate + L-glutamine = anthranilate + pyruvate + L-glutamate + H(+). The protein operates within amino-acid biosynthesis; L-tryptophan biosynthesis; L-tryptophan from chorismate: step 1/5. It functions in the pathway amino-acid biosynthesis; L-tryptophan biosynthesis; L-tryptophan from chorismate: step 3/5. Its pathway is amino-acid biosynthesis; L-tryptophan biosynthesis; L-tryptophan from chorismate: step 4/5. Trifunctional enzyme bearing the Gln amidotransferase (GATase) domain of anthranilate synthase, indole-glycerolphosphate synthase, and phosphoribosylanthranilate isomerase activities. The sequence is that of Multifunctional tryptophan biosynthesis protein (TRP1) from Cryptococcus neoformans var. grubii serotype A (strain H99 / ATCC 208821 / CBS 10515 / FGSC 9487) (Filobasidiella neoformans var. grubii).